We begin with the raw amino-acid sequence, 223 residues long: Adenylate kinase (223 aa).

Position 10-15 (glycine 10–threonine 15) interacts with ATP. An NMP region spans residues glutamate 30–valine 59. Residues serine 31, arginine 36, aspartate 57–valine 59, glycine 84–arginine 87, and glutamine 91 contribute to the AMP site. Positions glycine 125–aspartate 164 are LID. ATP is bound at residue arginine 126. Residues arginine 161 and arginine 173 each coordinate AMP. An ATP-binding site is contributed by glycine 209.

This sequence belongs to the adenylate kinase family. Monomer.

It localises to the cytoplasm. The catalysed reaction is AMP + ATP = 2 ADP. The protein operates within purine metabolism; AMP biosynthesis via salvage pathway; AMP from ADP: step 1/1. Catalyzes the reversible transfer of the terminal phosphate group between ATP and AMP. Plays an important role in cellular energy homeostasis and in adenine nucleotide metabolism. This Desulfovibrio desulfuricans (strain ATCC 27774 / DSM 6949 / MB) protein is Adenylate kinase.